We begin with the raw amino-acid sequence, 456 residues long: Bifunctional protein GlmU (456 aa).

A pyrophosphorylase region spans residues 1-229; that stretch reads MLNSAMSVVI…ISETDGVNNR (229 aa). UDP-N-acetyl-alpha-D-glucosamine is bound by residues 11–14, lysine 25, glutamine 76, 81–82, 103–105, glycine 140, glutamate 154, asparagine 169, and asparagine 227; these read LAAG, GT, and YGD. Aspartate 105 contributes to the Mg(2+) binding site. Asparagine 227 lines the Mg(2+) pocket. The tract at residues 230–250 is linker; it reads LQLSRLERIYQAEQAEKLLLS. The segment at 251–456 is N-acetyltransferase; the sequence is GVMLRDPARF…QGWQRPVKKK (206 aa). The UDP-N-acetyl-alpha-D-glucosamine site is built by arginine 333 and lysine 351. Residue histidine 363 is the Proton acceptor of the active site. UDP-N-acetyl-alpha-D-glucosamine is bound by residues tyrosine 366 and asparagine 377. Acetyl-CoA is bound by residues alanine 380, 386–387, serine 405, alanine 423, and arginine 440; that span reads NY.

It in the N-terminal section; belongs to the N-acetylglucosamine-1-phosphate uridyltransferase family. The protein in the C-terminal section; belongs to the transferase hexapeptide repeat family. Homotrimer. Mg(2+) serves as cofactor.

Its subcellular location is the cytoplasm. The catalysed reaction is alpha-D-glucosamine 1-phosphate + acetyl-CoA = N-acetyl-alpha-D-glucosamine 1-phosphate + CoA + H(+). It catalyses the reaction N-acetyl-alpha-D-glucosamine 1-phosphate + UTP + H(+) = UDP-N-acetyl-alpha-D-glucosamine + diphosphate. It functions in the pathway nucleotide-sugar biosynthesis; UDP-N-acetyl-alpha-D-glucosamine biosynthesis; N-acetyl-alpha-D-glucosamine 1-phosphate from alpha-D-glucosamine 6-phosphate (route II): step 2/2. The protein operates within nucleotide-sugar biosynthesis; UDP-N-acetyl-alpha-D-glucosamine biosynthesis; UDP-N-acetyl-alpha-D-glucosamine from N-acetyl-alpha-D-glucosamine 1-phosphate: step 1/1. It participates in bacterial outer membrane biogenesis; LPS lipid A biosynthesis. Its function is as follows. Catalyzes the last two sequential reactions in the de novo biosynthetic pathway for UDP-N-acetylglucosamine (UDP-GlcNAc). The C-terminal domain catalyzes the transfer of acetyl group from acetyl coenzyme A to glucosamine-1-phosphate (GlcN-1-P) to produce N-acetylglucosamine-1-phosphate (GlcNAc-1-P), which is converted into UDP-GlcNAc by the transfer of uridine 5-monophosphate (from uridine 5-triphosphate), a reaction catalyzed by the N-terminal domain. The protein is Bifunctional protein GlmU of Salmonella typhi.